The sequence spans 775 residues: WD repeat-containing protein pop1 (775 aa).

An F-box domain is found at 298 to 345 (KNFLTGFPAEITNLVLTHLDAPSLCAVSQVSHHWYKLVSSNEELWKSL). WD repeat units lie at residues 444–472 (EHEGDVWTFEYVGDTLVTGSTDRTVRVWD), 484–538 (GHTS…RLWS), 575–603 (GHTDSVREVACLGDLIVSASYDGTLRVWK), 615–645 (GHVGRVYSVTINPSRQQCISAGTDAKIRIWN), and 657–687 (GHSNLVSQVTFNQNILVSASAPPDTSLRVWD).

Homodimer and heterodimer with pop2. Binds to cdc18, phosphorylated cig2, cul1, pip1 and skp1.

Its subcellular location is the nucleus. Its function is as follows. Involved in maintenance of ploidy through proteasome dependent degradation of CDK inhibitor rum1 and S-phase initiator cdc18. Functions as a recognition factor for rum1 and cdc18, which are subsequently ubiquitinated and targeted to the 26S proteasome for degradation. Together with pop2, required for cig2 instability during G2 and M phase and cig2 degradation in exponentially growing cells. Regulates cell-cycle progression under starvation through the rum1 protein. This is WD repeat-containing protein pop1 (pop1) from Schizosaccharomyces pombe (strain 972 / ATCC 24843) (Fission yeast).